Consider the following 212-residue polypeptide: Urease accessory protein UreG (212 aa).

Residue 11–18 (GPVGSGKT) participates in GTP binding.

Belongs to the SIMIBI class G3E GTPase family. UreG subfamily. In terms of assembly, homodimer. UreD, UreF and UreG form a complex that acts as a GTP-hydrolysis-dependent molecular chaperone, activating the urease apoprotein by helping to assemble the nickel containing metallocenter of UreC. The UreE protein probably delivers the nickel.

It localises to the cytoplasm. Functionally, facilitates the functional incorporation of the urease nickel metallocenter. This process requires GTP hydrolysis, probably effectuated by UreG. The sequence is that of Urease accessory protein UreG from Trichodesmium erythraeum (strain IMS101).